The primary structure comprises 660 residues: UvrABC system protein B (660 aa).

A Helicase ATP-binding domain is found at 24-177 (KGFKEGNQFE…DDLARALIDL (154 aa)). 37–44 (GVTGSGKT) is a binding site for ATP. The short motif at 90–113 (YYDYYQPEAYVPQSDTYIAKDSSV) is the Beta-hairpin element. The Helicase C-terminal domain maps to 428 to 594 (QIDDLVSEVN…TIQKSVRDLI (167 aa)). One can recognise a UVR domain in the interval 620-655 (EKHIADIEKKMKKAAAELNFEAAAEYRDKLIMLKNT).

This sequence belongs to the UvrB family. As to quaternary structure, forms a heterotetramer with UvrA during the search for lesions. Interacts with UvrC in an incision complex.

The protein localises to the cytoplasm. The UvrABC repair system catalyzes the recognition and processing of DNA lesions. A damage recognition complex composed of 2 UvrA and 2 UvrB subunits scans DNA for abnormalities. Upon binding of the UvrA(2)B(2) complex to a putative damaged site, the DNA wraps around one UvrB monomer. DNA wrap is dependent on ATP binding by UvrB and probably causes local melting of the DNA helix, facilitating insertion of UvrB beta-hairpin between the DNA strands. Then UvrB probes one DNA strand for the presence of a lesion. If a lesion is found the UvrA subunits dissociate and the UvrB-DNA preincision complex is formed. This complex is subsequently bound by UvrC and the second UvrB is released. If no lesion is found, the DNA wraps around the other UvrB subunit that will check the other stand for damage. The protein is UvrABC system protein B of Agathobacter rectalis (strain ATCC 33656 / DSM 3377 / JCM 17463 / KCTC 5835 / VPI 0990) (Eubacterium rectale).